A 117-amino-acid chain; its full sequence is Ribosome-binding factor A (117 aa).

This sequence belongs to the RbfA family. Monomer. Binds 30S ribosomal subunits, but not 50S ribosomal subunits or 70S ribosomes.

Its subcellular location is the cytoplasm. One of several proteins that assist in the late maturation steps of the functional core of the 30S ribosomal subunit. Associates with free 30S ribosomal subunits (but not with 30S subunits that are part of 70S ribosomes or polysomes). Required for efficient processing of 16S rRNA. May interact with the 5'-terminal helix region of 16S rRNA. In Leuconostoc mesenteroides subsp. mesenteroides (strain ATCC 8293 / DSM 20343 / BCRC 11652 / CCM 1803 / JCM 6124 / NCDO 523 / NBRC 100496 / NCIMB 8023 / NCTC 12954 / NRRL B-1118 / 37Y), this protein is Ribosome-binding factor A.